The primary structure comprises 362 residues: Phosphoserine aminotransferase (362 aa).

The L-glutamate site is built by S9 and R42. Pyridoxal 5'-phosphate contacts are provided by residues 76 to 77, W102, T153, D174, and Q197; that span reads GR. At K198 the chain carries N6-(pyridoxal phosphate)lysine. 239–240 lines the pyridoxal 5'-phosphate pocket; that stretch reads NT.

It belongs to the class-V pyridoxal-phosphate-dependent aminotransferase family. SerC subfamily. In terms of assembly, homodimer. The cofactor is pyridoxal 5'-phosphate.

It localises to the cytoplasm. It carries out the reaction O-phospho-L-serine + 2-oxoglutarate = 3-phosphooxypyruvate + L-glutamate. The catalysed reaction is 4-(phosphooxy)-L-threonine + 2-oxoglutarate = (R)-3-hydroxy-2-oxo-4-phosphooxybutanoate + L-glutamate. It participates in amino-acid biosynthesis; L-serine biosynthesis; L-serine from 3-phospho-D-glycerate: step 2/3. It functions in the pathway cofactor biosynthesis; pyridoxine 5'-phosphate biosynthesis; pyridoxine 5'-phosphate from D-erythrose 4-phosphate: step 3/5. Catalyzes the reversible conversion of 3-phosphohydroxypyruvate to phosphoserine and of 3-hydroxy-2-oxo-4-phosphonooxybutanoate to phosphohydroxythreonine. This is Phosphoserine aminotransferase from Escherichia coli O1:K1 / APEC.